The following is a 508-amino-acid chain: Catalase (508 aa).

Residues His-63 and Asn-136 contribute to the active site. Tyr-346 serves as a coordination point for heme.

The protein belongs to the catalase family. In terms of assembly, homohexamer. Heme is required as a cofactor.

The protein resides in the cytoplasm. The catalysed reaction is 2 H2O2 = O2 + 2 H2O. Functionally, decomposes hydrogen peroxide into water and oxygen; serves to protect cells from the toxic effects of hydrogen peroxide. This Haemophilus influenzae (strain ATCC 51907 / DSM 11121 / KW20 / Rd) protein is Catalase (katA).